The sequence spans 520 residues: Probable cytochrome P450 4p2 (520 aa).

Heme is bound by residues E325 and C464.

The protein belongs to the cytochrome P450 family. Heme is required as a cofactor.

Its subcellular location is the endoplasmic reticulum membrane. It localises to the microsome membrane. Its function is as follows. May be involved in the metabolism of insect hormones and in the breakdown of synthetic insecticides. This chain is Probable cytochrome P450 4p2 (Cyp4p2), found in Drosophila melanogaster (Fruit fly).